Here is a 356-residue protein sequence, read N- to C-terminus: Protein pelota homolog (356 aa).

Belongs to the eukaryotic release factor 1 family. Pelota subfamily. In terms of assembly, monomer. Requires a divalent metal cation as cofactor.

The protein resides in the cytoplasm. In terms of biological role, may function in recognizing stalled ribosomes, interact with stem-loop structures in stalled mRNA molecules, and effect endonucleolytic cleavage of the mRNA. May play a role in the release non-functional ribosomes and degradation of damaged mRNAs. Has endoribonuclease activity. This is Protein pelota homolog from Staphylothermus marinus (strain ATCC 43588 / DSM 3639 / JCM 9404 / F1).